The sequence spans 313 residues: Malate dehydrogenase (313 aa).

Residues 11–16 and aspartate 35 each bind NAD(+); that span reads GAGNIG. Substrate contacts are provided by arginine 86 and arginine 92. NAD(+)-binding positions include asparagine 99 and 122–124; that span reads ISN. The substrate site is built by asparagine 124 and arginine 155. The active-site Proton acceptor is the histidine 179.

The protein belongs to the LDH/MDH superfamily. MDH type 3 family.

It catalyses the reaction (S)-malate + NAD(+) = oxaloacetate + NADH + H(+). Its function is as follows. Catalyzes the reversible oxidation of malate to oxaloacetate. This Sorangium cellulosum (strain So ce56) (Polyangium cellulosum (strain So ce56)) protein is Malate dehydrogenase.